Here is a 172-residue protein sequence, read N- to C-terminus: MNQDHPECDSEELTQNSPETDPLKVEVETLRGEIASIKADVLRERAELENQRKRLIRDVEQARKFANEKLLGELLPVFDSLDAGLTASGSEPSPLRDGLELTYKQLLKVAIDNGLMLLDPVGQLFNPEHHQAISQTEVTDVEPGHVIQVFQKGYLLNERLLRPALVVVAKQD.

Residues 1 to 23 (MNQDHPECDSEELTQNSPETDPL) are disordered.

Belongs to the GrpE family. As to quaternary structure, homodimer.

It is found in the cytoplasm. Its function is as follows. Participates actively in the response to hyperosmotic and heat shock by preventing the aggregation of stress-denatured proteins, in association with DnaK and GrpE. It is the nucleotide exchange factor for DnaK and may function as a thermosensor. Unfolded proteins bind initially to DnaJ; upon interaction with the DnaJ-bound protein, DnaK hydrolyzes its bound ATP, resulting in the formation of a stable complex. GrpE releases ADP from DnaK; ATP binding to DnaK triggers the release of the substrate protein, thus completing the reaction cycle. Several rounds of ATP-dependent interactions between DnaJ, DnaK and GrpE are required for fully efficient folding. The chain is Protein GrpE from Xylella fastidiosa (strain M23).